The following is a 142-amino-acid chain: Ribosome-binding factor A (142 aa).

Residues 119-142 (EAKQKQHGVETDAEQGETKDEGDK) form a disordered region.

The protein belongs to the RbfA family. Monomer. Binds 30S ribosomal subunits, but not 50S ribosomal subunits or 70S ribosomes.

It is found in the cytoplasm. In terms of biological role, one of several proteins that assist in the late maturation steps of the functional core of the 30S ribosomal subunit. Associates with free 30S ribosomal subunits (but not with 30S subunits that are part of 70S ribosomes or polysomes). Required for efficient processing of 16S rRNA. May interact with the 5'-terminal helix region of 16S rRNA. In Shewanella halifaxensis (strain HAW-EB4), this protein is Ribosome-binding factor A.